The following is a 494-amino-acid chain: MSLYEYKHPIINKDLAAPDPVSAQKRSFPTLEAWYDVINDYEFQSRCPIILKNSHKNKHFTFACHLKSCPFKILLSYQGANNSGSSEDGSPHGLSGDGGSSSSGSNHHNGHTNLAEDGRAEDEDDDEDDDAAVTAAIAAAVAAVADSQETIKGPFVVTKIEPYHNHPLESNLSLQRFVLSKIPKILQVDLKFDAILESLCNDDDNTVAKFRVAQYVEESGILDIIKQRYGLTEAEMDKKMLSNIARRVTTYKARFVLKRKKDGVYAMPTAHQLTGGDHHQVQHHHHPSIPAHHQHQLPEGQQRDVQHHHQQQQQQLQHQEQHQSHVDSGHNVYQNRIGSISDNDDSAIHNLDDTNVRVAAAAAAAAAALQSRENHDTEDLKRTLEQVQDDESLDVGVPDSKRQLHRRERDRVAEALKMATRDILSNQSVDSDVNVDVDLVTGHKQLSPHDDMAEQLRLLSSHLKEVEAEENVSDNNLKKDDIPDENIQPELRGQ.

Disordered stretches follow at residues 82 to 130 (NSGS…EDDD) and 273 to 328 (LTGG…HVDS). Residues 119–130 (RAEDEDDDEDDD) are compositionally biased toward acidic residues. Residues 281–295 (VQHHHHPSIPAHHQH) show a composition bias toward basic residues. Positions 319-328 (QEQHQSHVDS) are enriched in basic and acidic residues. Ser-400 carries the post-translational modification Phosphoserine; by PKC. The interval 467 to 494 (EAEENVSDNNLKKDDIPDENIQPELRGQ) is disordered.

The protein belongs to the ABF1 family. Post-translationally, extensively phosphorylated on Ser and Thr residues.

It is found in the nucleus. General regulatory factor (GRF) that contributes to transcriptional activation of a large number of genes, as well as to DNA replication, silencing and telomere structure. Involved in the transcription activation of a subset of ribosomal protein genes. Binds the ARS-elements found in many promoters. Binds to the sequence 5'-TCN(7)ACG-3'. The sequence is that of ARS-binding factor 1 (ABF1) from Kluyveromyces lactis (strain ATCC 8585 / CBS 2359 / DSM 70799 / NBRC 1267 / NRRL Y-1140 / WM37) (Yeast).